Reading from the N-terminus, the 1449-residue chain is MELRSDASHKENVSPKPAALPKPEQRRFRRSLGIGLSGRHDQWVPGCQVERGGPAATPSPGAVLDQEPCRVQTNLASPGPRLGLALKDTTGQLVNSSFWQQSNLQSLARRRQGKAREFAIQQSNLSINETSSPHLCPEPGGSSGPHKLPWGPLLSQEPLARPSSCLRQSGLPAPGTPSGDFRPTEAFAPLDGHTQPGLRSWGGLGSWRSRLVGEPLTLEDLAVPSQNQTQAPSRAAVHQLLASVHCLAQEAARLRCQAPQEPPGAVQQDLWTGGGQPFSAHPQPSQPVLASSDGRRRRLRGHRETAAFLETPASLSDSWAQSKLMSPETTLGTRTKDSLNPEQGLPPAHPLGSGDSCSPWSQDGRAQRGDPSLPRGVGSRGTDPCSSAFSNTAWGVSPKQKGEEGAPRERVHREEERTAFHLSDTVPASSASKNKAQNITAPESEAICWQLLSRCFRSWRHLVKRQREPAAAAVALGRWQLLRKCLQALWLREAQLEAAWGQYTKVLLVRSFREWRNLALQQKQVQPHMQAGPGSPPSRRAQGKGLSLGRSTVVDPAQRSRLEHTSPGSLREEEIAQRLLSHPRQRTDSRHERVQILQALQLAVFFLWCQQKKRARQERETLRKATRATQRTGSFPQAWHSTAAGVAWVAPLSPQHQRAWLCRCFGAWQQFVQRGSRYRDHLADRRTGTLRKCLEQWVRMKQLRESDGAKVTQLSLCRQKAGREAVYTAGPGACGLGAVGQAQGQQEQGRGSLQDACWTLALCWALLLWKMRLFQRQWANSFFQGLQQRMLQRSLRWWHLRALGPDATSSCTKTPSALEPLSSSTLQDSLEKVPRAPTLPDTLQGSLLWAAGQRQQGQCLLLWQARAQQFQGTARWYQHTRQRRIFLSWSRWATAQWAWRELASHRAWDRTCRAVLGLWRQRLLQSRLVEWWAQERGWRLARDALCHWHSCWQGQQFLHEKCQTWVQVHLQGLQKVVFRSWQQAAAHQRCTVTRPEQLLLQSYFQAWCEVVRDTGVLRAQHQAFQDGLRRRALGAVFATWREAQEVAAGAQEQRVAQASLARWRSCGQQGQEDGQQKKARAPQAFPAWPVAPGMHHEAQQQAGESAGAQAAQCWTWCWALWVHESCRGQVSRAHASWKPRAWVLEASVQSAVRGGVQRAILTQLRPAELRRFLRTVQLRVRLGLPGAGKTRSCWTQATELVPPAPSLQCSLGGRRKPRGTAWAQRCREHSLCPAFQLWPQWPGQSSWVPGLPLWTRDQGPRAHSSPEPRACKAQSKAHKRRLRARSCRILEKQAQAHGSALLLALKGHDALGHQEEVPAAPVPRGTASRAAGFPAGQVPGSGMAALGGCPRGRAAGADPAQGVAPEMGLADVVAADPATASGSAVTAAGRWAFKKWHQRLAARSPRRGAASSPRPWSKPGPKGPESGQEAARAPRGWGLGAEHGAQLQL.

Residues 1-13 (MELRSDASHKENV) show a composition bias toward basic and acidic residues. 7 disordered regions span residues 1–32 (MELRSDASHKENVSPKPAALPKPEQRRFRRSL), 123–201 (SNLS…LRSW), 258–298 (APQE…RRRR), 315–437 (LSDS…NKAQ), 523–551 (KQVQPHMQAGPGSPPSRRAQGKGLSLGRS), 1257–1278 (DQGPRAHSSPEPRACKAQSKAH), and 1399–1449 (RLAA…QLQL). A compositionally biased stretch (polar residues) spans 123–133 (SNLSINETSSP). Composition is skewed to polar residues over residues 315-333 (LSDSWAQSKLMSPETTLGT) and 384-394 (PCSSAFSNTAW). The span at 400–419 (QKGEEGAPRERVHREEERTA) shows a compositional bias: basic and acidic residues. Positions 426–437 (VPASSASKNKAQ) are enriched in polar residues. The segment covering 1258–1270 (QGPRAHSSPEPRA) has biased composition (basic and acidic residues).

This is an uncharacterized protein from Homo sapiens (Human).